The primary structure comprises 128 residues: MTEYTPDEKLRLHQLRKLRRRWLKDQELSHREPVLPPQKMGPMEKFWNTFLENKSPWRKMVHGVYQKSIFVFTHILVPAWIIHYYMKYHVSEKPYGIVETKPRIFPGDTILETGEVIPPMKEFPDQHH.

Residue threonine 2 is modified to N-acetylthreonine. Lysine 24 is subject to N6-acetyllysine. The helical transmembrane segment at 68–86 threads the bilayer; it reads SIFVFTHILVPAWIIHYYM.

Belongs to the complex I NDUFB6 subunit family. In terms of assembly, complex I is composed of 45 different subunits.

It localises to the mitochondrion inner membrane. Accessory subunit of the mitochondrial membrane respiratory chain NADH dehydrogenase (Complex I), that is believed not to be involved in catalysis. Complex I functions in the transfer of electrons from NADH to the respiratory chain. The immediate electron acceptor for the enzyme is believed to be ubiquinone. The protein is NADH dehydrogenase [ubiquinone] 1 beta subcomplex subunit 6 (NDUFB6) of Pongo abelii (Sumatran orangutan).